The chain runs to 636 residues: MPSQSNNVITSSTASSSMSSSSNSSDASSTSSSNTNNAHSSNNQFVSGQLNLVGNTHTKINDNYEIISKIGEGISGSVFKAIKKGTEEMVALKNFKGWTEGDRASKEECSLLQQLRHIPYITPVIDIYTNFETSEYIIVFPYFEHDLSGLLSEHRLSIPQVKCYFKQLLEGINEIHNAGVMHRDIKAANLLVNNKGSLFIGDLGTATSYTKRSVFSSKVVTLWYRAPELLLGSTQYGPEIDMWSIGCVLIELVTSRNFLPGSSEQQQLEAICKLCGTPTDEIWPNVSQLQNFNQISHLPVYPSRLRTVFKNFSNDFIELLEGLLTLNPKKRLTAEQALQSPFFTNHPLPFKPENMPGYQPIHVLEAVQKRVQQQQELEQQKKQEEQKKQQEEQKKLEDQKKQEEQKKQEDLLKRQRLLKRQQELKKQQDEQRQQELIKKQQEQEQLRLKVEHEKQRQEQERLRLIQQEQERLKRQQQEHEQRLQREQQQQLNQLQQQKESPLNNSYGKINLKRSLDLVNDIRNYCTSETESEYESDEEDFYTEEEVEDYSSDEEDDYYNAQSNKSLYTPIKAMIQQHNNNQQHQQQYPYSQQQQEPISSNPFLQPPKKQRTASTGFNNNNGNNNNNNNLSTPLTIH.

The tract at residues 1 to 41 is disordered; sequence MPSQSNNVITSSTASSSMSSSSNSSDASSTSSSNTNNAHSS. Residues 64–343 enclose the Protein kinase domain; that stretch reads YEIISKIGEG…AEQALQSPFF (280 aa). ATP-binding positions include 70 to 78 and lysine 93; that span reads IGEGISGSV. Residue aspartate 184 is the Proton acceptor of the active site. Disordered regions lie at residues 378–408, 473–506, 527–555, and 579–636; these read EQQK…QKKQ, KRQQ…NNSY, SETE…DEED, and NNQQ…LTIH. Over residues 473–485 the composition is skewed to basic and acidic residues; sequence KRQQQEHEQRLQR. The span at 486 to 499 shows a compositional bias: low complexity; sequence EQQQQLNQLQQQKE. Acidic residues predominate over residues 529 to 555; the sequence is TESEYESDEEDFYTEEEVEDYSSDEED. 2 stretches are compositionally biased toward low complexity: residues 579–594 and 617–628; these read NNQQ…QQQQ and NNNNGNNNNNNN.

It belongs to the protein kinase superfamily. CMGC Ser/Thr protein kinase family. CDC2/CDKX subfamily.

It catalyses the reaction L-seryl-[protein] + ATP = O-phospho-L-seryl-[protein] + ADP + H(+). The catalysed reaction is L-threonyl-[protein] + ATP = O-phospho-L-threonyl-[protein] + ADP + H(+). This is Probable cyclin-dependent serine/threonine-protein kinase DDB_G0278487 from Dictyostelium discoideum (Social amoeba).